A 623-amino-acid chain; its full sequence is E3 ubiquitin-protein ligase ORTHRUS 5 (623 aa).

The segment at 12–62 adopts a PHD-type zinc-finger fold; that stretch reads DGVCMRCQVNPPSEETLTCGTCVTPWHVSCLLPESLASSTGDWECPDCSGV. Residues 129 to 169 form an RING-type 1 zinc finger; sequence CSICIQLPERPVTTPCGHNFCLKCFEKWAVGQGKLTCMICR. The YDG domain maps to 258–407; the sequence is TRNQGVLVGE…HKMCRYLFVR (150 aa). Residues 498–555 form an RING-type 2 zinc finger; it reads CQICRKVLSLPVTTPCAHNFCKACLEAKFAGITQLRDRSNGVRKLRAKKNIMTCPCCT. The tract at residues 580–623 is disordered; the sequence is KSEEEAEVAESSNISEEEGEEESEPPTKKIKMDKNSVGGTSLSA. The span at 594–603 shows a compositional bias: acidic residues; it reads SEEEGEEESE. Positions 604 to 613 are enriched in basic and acidic residues; sequence PPTKKIKMDK.

In terms of tissue distribution, expressed in inflorescences.

The protein localises to the nucleus. The catalysed reaction is S-ubiquitinyl-[E2 ubiquitin-conjugating enzyme]-L-cysteine + [acceptor protein]-L-lysine = [E2 ubiquitin-conjugating enzyme]-L-cysteine + N(6)-ubiquitinyl-[acceptor protein]-L-lysine.. It participates in protein modification; protein ubiquitination. E3 ubiquitin-protein ligase. Participates in CpG methylation-dependent transcriptional regulation and epigenetic transcriptional silencing. Mediates ubiquitination with the E2 ubiquitin-conjugating enzyme UBC11. The polypeptide is E3 ubiquitin-protein ligase ORTHRUS 5 (ORTH5) (Arabidopsis thaliana (Mouse-ear cress)).